The chain runs to 224 residues: Peroxiredoxin-6 (224 aa).

Positions 5–169 (LLLGDEAPNF…ILRVVISLQL (165 aa)) constitute a Thioredoxin domain. The tract at residues 31 to 40 (DSWGILFSHP) is required and sufficient for targeting to lysosomes and lamellar bodies. Thr-44 is modified (phosphothreonine). Cys-47 acts as the Cysteine sulfenic acid (-SOH) intermediate; for peroxidase activity in catalysis. At Lys-63 the chain carries N6-acetyllysine. Phosphotyrosine is present on Tyr-89. Catalysis depends on Asp-140, which acts as the For phospholipase activity. A Phosphothreonine; by MAPK modification is found at Thr-177. An N6-acetyllysine; alternate modification is found at Lys-209. Lys-209 carries the post-translational modification N6-succinyllysine; alternate.

It belongs to the peroxiredoxin family. Prx6 subfamily. As to quaternary structure, homodimer. Interacts with GSTP1; mediates PRDX6 glutathionylation and regeneration. Interacts with APEX1. Interacts with STH. May interact with FAM168B. May interact with HTR2A. In terms of processing, irreversibly inactivated by overoxidation of Cys-47 to sulfinic acid (Cys-SO(2)H) and sulfonic acid (Cys-SO(3)H) forms upon oxidative stress. Phosphorylation at Thr-177 by MAP kinases increases the phospholipase activity of the enzyme. The phosphorylated form exhibits a greater lysophosphatidylcholine acyltransferase activity compared to the non-phosphorylated form.

The protein resides in the cytoplasm. It is found in the lysosome. The catalysed reaction is a hydroperoxide + 2 glutathione = an alcohol + glutathione disulfide + H2O. It carries out the reaction a 1,2-diacyl-sn-glycero-3-phosphocholine + H2O = a 1-acyl-sn-glycero-3-phosphocholine + a fatty acid + H(+). The enzyme catalyses a 1-acyl-sn-glycero-3-phosphocholine + an acyl-CoA = a 1,2-diacyl-sn-glycero-3-phosphocholine + CoA. It catalyses the reaction 1-hexadecanoyl-sn-glycero-3-phosphocholine + hexadecanoyl-CoA = 1,2-dihexadecanoyl-sn-glycero-3-phosphocholine + CoA. The catalysed reaction is 1,2-dihexadecanoyl-sn-glycero-3-phosphocholine + H2O = 1-hexadecanoyl-sn-glycero-3-phosphocholine + hexadecanoate + H(+). Its function is as follows. Thiol-specific peroxidase that catalyzes the reduction of hydrogen peroxide and organic hydroperoxides to water and alcohols, respectively. Can reduce H(2)O(2) and short chain organic, fatty acid, and phospholipid hydroperoxides. Also has phospholipase activity, and can therefore either reduce the oxidized sn-2 fatty acyl group of phospholipids (peroxidase activity) or hydrolyze the sn-2 ester bond of phospholipids (phospholipase activity). These activities are dependent on binding to phospholipids at acidic pH and to oxidized phospholipds at cytosolic pH. Plays a role in cell protection against oxidative stress by detoxifying peroxides and in phospholipid homeostasis. Exhibits acyl-CoA-dependent lysophospholipid acyltransferase which mediates the conversion of lysophosphatidylcholine (1-acyl-sn-glycero-3-phosphocholine or LPC) into phosphatidylcholine (1,2-diacyl-sn-glycero-3-phosphocholine or PC). Shows a clear preference for LPC as the lysophospholipid and for palmitoyl CoA as the fatty acyl substrate. The protein is Peroxiredoxin-6 (PRDX6) of Macaca fascicularis (Crab-eating macaque).